The following is a 299-amino-acid chain: Acetylglutamate kinase (299 aa).

Substrate contacts are provided by residues 64-65 (GG), Arg-86, and Asn-197.

The protein belongs to the acetylglutamate kinase family. ArgB subfamily.

The protein resides in the cytoplasm. It carries out the reaction N-acetyl-L-glutamate + ATP = N-acetyl-L-glutamyl 5-phosphate + ADP. Its pathway is amino-acid biosynthesis; L-arginine biosynthesis; N(2)-acetyl-L-ornithine from L-glutamate: step 2/4. In terms of biological role, catalyzes the ATP-dependent phosphorylation of N-acetyl-L-glutamate. In Sulfurihydrogenibium sp. (strain YO3AOP1), this protein is Acetylglutamate kinase.